The primary structure comprises 82 residues: Small ribosomal subunit protein bS16 (82 aa).

It belongs to the bacterial ribosomal protein bS16 family.

The polypeptide is Small ribosomal subunit protein bS16 (Photorhabdus laumondii subsp. laumondii (strain DSM 15139 / CIP 105565 / TT01) (Photorhabdus luminescens subsp. laumondii)).